The following is a 109-amino-acid chain: Flagellar hook-basal body complex protein FliE (109 aa).

This sequence belongs to the FliE family.

The protein resides in the bacterial flagellum basal body. The chain is Flagellar hook-basal body complex protein FliE from Nitrosomonas eutropha (strain DSM 101675 / C91 / Nm57).